A 78-amino-acid chain; its full sequence is MKTLLLTFLVVTIVCLDLGYTLICHRVHGLQTCEPDQKFCFRKTTMFFPNHPVLLMGCTYSCPTEKYSVCCSTDKCNK.

The signal sequence occupies residues 1–21 (MKTLLLTFLVVTIVCLDLGYT). 4 disulfide bridges follow: cysteine 24/cysteine 40, cysteine 33/cysteine 58, cysteine 62/cysteine 70, and cysteine 71/cysteine 76.

The protein belongs to the three-finger toxin family. Short-chain subfamily. As to expression, expressed by the venom gland.

Its subcellular location is the secreted. Its function is as follows. This three-finger toxin binds and inhibits the nicotinic acetylcholine receptor (nAChR). The polypeptide is Short neurotoxin SNTX11 (Ophiophagus hannah (King cobra)).